Here is a 403-residue protein sequence, read N- to C-terminus: Phospholipase A1-II 2 (403 aa).

S218 serves as the catalytic Acyl-ester intermediate. Residues S218, D286, and H323 each act as charge relay system in the active site. A disordered region spans residues 381–403 (GPDGRWVLQDHEPDDDDDDDDDD). The span at 392–403 (EPDDDDDDDDDD) shows a compositional bias: acidic residues.

Belongs to the AB hydrolase superfamily. Lipase family.

It localises to the cytoplasm. Functionally, acylhydrolase that catalyzes the hydrolysis of phospholipids at the sn-1 position. The protein is Phospholipase A1-II 2 of Oryza sativa subsp. indica (Rice).